Here is a 980-residue protein sequence, read N- to C-terminus: Probable outer membrane protein PmpH (980 aa).

A signal peptide spans 1 to 24; sequence MPFSLRSTSFCFLACLCSYSYGLA. One can recognise an Autotransporter domain in the interval 661–980; the sequence is GELVPNSLWV…FVSLGLNRIF (320 aa).

Belongs to the PMP outer membrane protein family.

It is found in the secreted. Its subcellular location is the cell wall. The protein resides in the cell outer membrane. The chain is Probable outer membrane protein PmpH (pmpH) from Chlamydia muridarum (strain MoPn / Nigg).